A 488-amino-acid polypeptide reads, in one-letter code: Glutamyl-tRNA(Gln) amidotransferase subunit A (488 aa).

Active-site charge relay system residues include Lys77 and Ser152. Ser176 acts as the Acyl-ester intermediate in catalysis.

This sequence belongs to the amidase family. GatA subfamily. Heterotrimer of A, B and C subunits.

The catalysed reaction is L-glutamyl-tRNA(Gln) + L-glutamine + ATP + H2O = L-glutaminyl-tRNA(Gln) + L-glutamate + ADP + phosphate + H(+). Allows the formation of correctly charged Gln-tRNA(Gln) through the transamidation of misacylated Glu-tRNA(Gln) in organisms which lack glutaminyl-tRNA synthetase. The reaction takes place in the presence of glutamine and ATP through an activated gamma-phospho-Glu-tRNA(Gln). This is Glutamyl-tRNA(Gln) amidotransferase subunit A from Streptococcus pyogenes serotype M2 (strain MGAS10270).